A 544-amino-acid chain; its full sequence is Chaperonin GroEL (544 aa).

Residues 29–32, 86–90, glycine 413, 476–478, and aspartate 492 each bind ATP; these read TLGP, DGTTT, and NAA.

The protein belongs to the chaperonin (HSP60) family. As to quaternary structure, forms a cylinder of 14 subunits composed of two heptameric rings stacked back-to-back. Interacts with the co-chaperonin GroES.

Its subcellular location is the cytoplasm. It catalyses the reaction ATP + H2O + a folded polypeptide = ADP + phosphate + an unfolded polypeptide.. Its function is as follows. Together with its co-chaperonin GroES, plays an essential role in assisting protein folding. The GroEL-GroES system forms a nano-cage that allows encapsulation of the non-native substrate proteins and provides a physical environment optimized to promote and accelerate protein folding. The protein is Chaperonin GroEL of Bacillus velezensis (strain DSM 23117 / BGSC 10A6 / LMG 26770 / FZB42) (Bacillus amyloliquefaciens subsp. plantarum).